Consider the following 341-residue polypeptide: Transcription factor ETV7 (341 aa).

In terms of domain architecture, PNT spans 33–117; the sequence is NLLGEGGICK…ELLQYIKTQR (85 aa). The ETS DNA-binding region spans 224–305; sequence RLLWDYVYQL…PGQKLLFRFL (82 aa). Positions 315–341 are disordered; it reads KHSHLEPLESQEQDRIEFKDKRPEISP.

The protein belongs to the ETS family. In terms of tissue distribution, expressed in hematopoietic tissues.

The protein localises to the nucleus. Transcriptional repressor; binds to the DNA sequence 5'-CCGGAAGT-3'. Isoform A does not seem to have a repressor activity. Isoform C does not seem to have a repressor activity. This chain is Transcription factor ETV7 (ETV7), found in Homo sapiens (Human).